A 216-amino-acid chain; its full sequence is 3-isopropylmalate dehydratase small subunit (216 aa).

This sequence belongs to the LeuD family. LeuD type 1 subfamily. Heterodimer of LeuC and LeuD.

It carries out the reaction (2R,3S)-3-isopropylmalate = (2S)-2-isopropylmalate. The protein operates within amino-acid biosynthesis; L-leucine biosynthesis; L-leucine from 3-methyl-2-oxobutanoate: step 2/4. Its function is as follows. Catalyzes the isomerization between 2-isopropylmalate and 3-isopropylmalate, via the formation of 2-isopropylmaleate. The polypeptide is 3-isopropylmalate dehydratase small subunit (Cupriavidus pinatubonensis (strain JMP 134 / LMG 1197) (Cupriavidus necator (strain JMP 134))).